The following is a 296-amino-acid chain: NAD kinase (296 aa).

Residue D72 is the Proton acceptor of the active site. NAD(+) is bound by residues 72–73 (DG), 146–147 (ND), R157, K174, D176, 187–192 (TAYALS), and Q247.

Belongs to the NAD kinase family. It depends on a divalent metal cation as a cofactor.

The protein resides in the cytoplasm. The enzyme catalyses NAD(+) + ATP = ADP + NADP(+) + H(+). Its function is as follows. Involved in the regulation of the intracellular balance of NAD and NADP, and is a key enzyme in the biosynthesis of NADP. Catalyzes specifically the phosphorylation on 2'-hydroxyl of the adenosine moiety of NAD to yield NADP. The sequence is that of NAD kinase from Pseudomonas syringae pv. tomato (strain ATCC BAA-871 / DC3000).